The chain runs to 684 residues: Calpain-14 (684 aa).

In terms of domain architecture, Calpain catalytic spans 43–336 (LFEDTSFPAT…FVLLVICKLT (294 aa)). Active-site residues include Cys-101, His-254, and Asn-278. The domain III stretch occupies residues 337-503 (PGLLSQEAAQ…KHIFYEIGSN (167 aa)). A linker region spans residues 504 to 517 (SGVVFSKEIEDQNE). The interval 518–683 (RQDEFFTKFF…KPEWMMMALY (166 aa)) is domain IV. EF-hand domains lie at 557–592 (FSLE…LKLS), 586–621 (WKQL…AGIM), and 651–684 (LRVE…ALYS). Ca(2+) is bound by residues Asp-570, Asn-572, Ser-574, Thr-576, and Glu-581.

It belongs to the peptidase C2 family. In terms of tissue distribution, not expressed in tissues tested.

In terms of biological role, calcium-regulated non-lysosomal thiol-protease. This Homo sapiens (Human) protein is Calpain-14 (CAPN14).